Reading from the N-terminus, the 438-residue chain is UDP-N-acetylmuramoylalanine--D-glutamate ligase (438 aa).

112–118 (GSNGKST) is a binding site for ATP.

Belongs to the MurCDEF family.

It is found in the cytoplasm. The enzyme catalyses UDP-N-acetyl-alpha-D-muramoyl-L-alanine + D-glutamate + ATP = UDP-N-acetyl-alpha-D-muramoyl-L-alanyl-D-glutamate + ADP + phosphate + H(+). Its pathway is cell wall biogenesis; peptidoglycan biosynthesis. Functionally, cell wall formation. Catalyzes the addition of glutamate to the nucleotide precursor UDP-N-acetylmuramoyl-L-alanine (UMA). The sequence is that of UDP-N-acetylmuramoylalanine--D-glutamate ligase from Shigella dysenteriae serotype 1 (strain Sd197).